A 153-amino-acid chain; its full sequence is Insulin-like growth factor 1 (153 aa).

The b stretch occupies residues 49 to 77 (GPETLCGAELVDALQFVCGDRGFYFNKPT). Intrachain disulfides connect cysteine 54-cysteine 96, cysteine 66-cysteine 109, and cysteine 95-cysteine 100. Positions 78–89 (GYGSSSRRAPQT) are c. An a region spans residues 90 to 110 (GIVDECCFRSCDLRRLEMYCA). The segment at 111–118 (PLKPAKSA) is d. Positions 119–153 (RSVRAQRHTDMPKAQKEVHLKNASRGSAGNKNYRM) are cleaved as a propeptide — e peptide. The interval 120 to 153 (SVRAQRHTDMPKAQKEVHLKNASRGSAGNKNYRM) is disordered. Residues 125–138 (RHTDMPKAQKEVHL) are compositionally biased toward basic and acidic residues. Polar residues predominate over residues 142-153 (SRGSAGNKNYRM).

Belongs to the insulin family. As to quaternary structure, forms a ternary complex with IGFR1 and ITGAV:ITGB3. Forms a ternary complex with IGFR1 and ITGA6:ITGB4. Forms a ternary complex with IGFBP3 and ALS.

It localises to the secreted. In terms of biological role, the insulin-like growth factors, isolated from plasma, are structurally and functionally related to insulin but have a much higher growth-promoting activity. May be a physiological regulator of [1-14C]-2-deoxy-D-glucose (2DG) transport and glycogen synthesis in osteoblasts. Stimulates glucose transport in bone-derived osteoblastic (PyMS) cells and is effective at much lower concentrations than insulin, not only regarding glycogen and DNA synthesis but also with regard to enhancing glucose uptake. May play a role in synapse maturation. Ca(2+)-dependent exocytosis of IGF1 is required for sensory perception of smell in the olfactory bulb. Acts as a ligand for IGF1R. Binds to the alpha subunit of IGF1R, leading to the activation of the intrinsic tyrosine kinase activity which autophosphorylates tyrosine residues in the beta subunit thus initiating a cascade of down-stream signaling events leading to activation of the PI3K-AKT/PKB and the Ras-MAPK pathways. Binds to integrins ITGAV:ITGB3 and ITGA6:ITGB4. Its binding to integrins and subsequent ternary complex formation with integrins and IGFR1 are essential for IGF1 signaling. Induces the phosphorylation and activation of IGFR1, MAPK3/ERK1, MAPK1/ERK2 and AKT1. As part of the MAPK/ERK signaling pathway, acts as a negative regulator of apoptosis in cardiomyocytes via promotion of STUB1/CHIP-mediated ubiquitination and degradation of ICER-type isoforms of CREM. The chain is Insulin-like growth factor 1 from Canis lupus familiaris (Dog).